The chain runs to 750 residues: MGKSESQMDITDINTPKPKKKQRWTPLEISLSVLVLLLTIIAVTMIALYATYDDGICKSSDCIKSAARLIQNMDATTEPCTDFFKYACGGWLKRNVIPETSSRYGNFDILRDELEVVLKDVLQEPKTEDIVAVQKAKALYRSCINESAIDSRGGEPLLKLLPDIYGWPVATENWEQKYGASWTAEKAIAQLNSKYGKKVLINLFVGTDDKNSVNHVIHIDQPRLGLPSRDYYECTGIYKEACTAYVDFMISVARLIRQEERLPIDENQLALEMNKVMELEKEIANATAKPEDRNDPMLLYNKMTLAQIQNNFSLEINGKPFSWLNFTNEIMSTVNISITNEEDVVVYAPEYLTKLKPILTKYSARDLQNLMSWRFIMDLVSSLSRTYKESRNAFRKALYGTTSETATWRRCANYVNGNMENAVGRLYVEAAFAGESKHVVEDLIAQIREVFIQTLDDLTWMDAETKKRAEEKALAIKERIGYPDDIVSNDNKLNNEYLELNYKEDEYFENIIQNLKFSQSKQLKKLREKVDKDEWISGAAVVNAFYSSGRNQIVFPAGILQPPFFSAQQSNSLNYGGIGMVIGHEITHGFDDNGRNFNKDGDLVDWWTQQSASNFKEQSQCMVYQYGNFSWDLAGGQHLNGINTLGENIADNGGLGQAYRAYQNYIKKNGEEKLLPGLDLNHKQLFFLNFAQVWCGTYRPEYAVNSIKTDVHSPGNFRIIGTLQNSAEFSEAFHCRKNSYMNPEKKCRVW.

Polar residues predominate over residues 1–14 (MGKSESQMDITDIN). Residues 1 to 20 (MGKSESQMDITDINTPKPKK) are disordered. Glycine 2 carries N-myristoyl glycine lipidation. The Cytoplasmic segment spans residues 2–28 (GKSESQMDITDINTPKPKKKQRWTPLE). 2 positions are modified to phosphoserine: serine 4 and serine 6. Positions 16–23 (PKPKKKQR) match the Stop-transfer sequence motif. A helical; Signal-anchor for type II membrane protein transmembrane segment spans residues 29–51 (ISLSVLVLLLTIIAVTMIALYAT). Residues 52–750 (YDDGICKSSD…MNPEKKCRVW (699 aa)) lie on the Extracellular side of the membrane. A Peptidase M13 domain is found at 56–750 (ICKSSDCIKS…MNPEKKCRVW (695 aa)). Disulfide bonds link cysteine 57–cysteine 62, cysteine 80–cysteine 735, cysteine 88–cysteine 695, cysteine 143–cysteine 411, cysteine 234–cysteine 242, and cysteine 621–cysteine 747. Arginine 103 is a binding site for a peptide. Residue asparagine 145 is glycosylated (N-linked (GlcNAc...) asparagine). N-linked (GlcNAc...) asparagine glycans are attached at residues asparagine 285 and asparagine 325. Histidine 584 provides a ligand contact to Zn(2+). Residue glutamate 585 is part of the active site. Histidine 588 is a Zn(2+) binding site. Asparagine 628 carries an N-linked (GlcNAc...) asparagine glycan. A Zn(2+)-binding site is contributed by glutamate 647. The Proton donor role is filled by aspartate 651.

This sequence belongs to the peptidase M13 family. Zn(2+) is required as a cofactor. In terms of processing, myristoylation is a determinant of membrane targeting. Post-translationally, glycosylation at Asn-628 is necessary both for surface expression and neutral endopeptidase activity.

The protein resides in the cell membrane. It catalyses the reaction Preferential cleavage of polypeptides between hydrophobic residues, particularly with Phe or Tyr at P1'.. The catalysed reaction is substance P + H2O = substance P(1-9) + L-Leu-L-Met-NH2. It carries out the reaction substance P + H2O = substance P(1-7) + L-Phe-Gly-L-Leu-L-Met-NH2. The enzyme catalyses neurotensin + H2O = neurotensin(1-11) + L-isoleucyl-L-leucine. It catalyses the reaction neurotensin + H2O = neurotensin(1-10) + L-tyrosyl-L-isoleucyl-L-leucine. Inhibited in a dose dependent manner by opiorphin. Activated by K49-P1-20, a twenty-residue synthetic peptide shortened from the snake B.asper myotoxin II. Its function is as follows. Thermolysin-like specificity, but is almost confined on acting on polypeptides of up to 30 amino acids. Biologically important in the destruction of opioid peptides such as Met- and Leu-enkephalins by cleavage of a Gly-Phe bond. Catalyzes cleavage of bradykinin, substance P and neurotensin peptides. Able to cleave angiotensin-1, angiotensin-2 and angiotensin 1-9. Involved in the degradation of atrial natriuretic factor (ANF) and brain natriuretic factor (BNP(1-32)). Displays UV-inducible elastase activity toward skin preelastic and elastic fibers. In Homo sapiens (Human), this protein is Neprilysin.